The sequence spans 188 residues: Elongation factor P (188 aa).

N6-(3,6-diaminohexanoyl)-5-hydroxylysine is present on Lys34.

This sequence belongs to the elongation factor P family. May be beta-lysylated on the epsilon-amino group of Lys-34 by the combined action of EpmA and EpmB, and then hydroxylated on the C5 position of the same residue by EpmC (if this protein is present). Lysylation is critical for the stimulatory effect of EF-P on peptide-bond formation. The lysylation moiety may extend toward the peptidyltransferase center and stabilize the terminal 3-CCA end of the tRNA. Hydroxylation of the C5 position on Lys-34 may allow additional potential stabilizing hydrogen-bond interactions with the P-tRNA.

The protein localises to the cytoplasm. It participates in protein biosynthesis; polypeptide chain elongation. In terms of biological role, involved in peptide bond synthesis. Alleviates ribosome stalling that occurs when 3 or more consecutive Pro residues or the sequence PPG is present in a protein, possibly by augmenting the peptidyl transferase activity of the ribosome. Modification of Lys-34 is required for alleviation. This is Elongation factor P from Vibrio atlanticus (strain LGP32) (Vibrio splendidus (strain Mel32)).